The sequence spans 338 residues: Tripartite motif-containing protein 44 (338 aa).

Disordered stretches follow at residues 1-25 (MASG…EPDE) and 72-162 (ARGD…EFDP). Residues 95-162 (EAGEGIESEE…ETEAESEFDP (68 aa)) are compositionally biased toward acidic residues. Residues 109 to 153 (EEESETEEESEDESEEDSEEEMEDEQESEAEEDNQEEGESEAEGE) adopt a coiled-coil conformation. A B box-type zinc finger spans residues 171–212 (VAKRKCPDHGLDLSTYCQEDKQLICVLCPVIGAHHGHHLSTL). Zn(2+)-binding residues include cysteine 176, histidine 179, cysteine 198, and histidine 204. The stretch at 257 to 322 (QQEFKKVQKV…QLDTSNESAE (66 aa)) forms a coiled coil. The segment at 307-338 (MAQAKEQLDTSNESAEPKAEGDEEEPGGTDED) is disordered. Positions 327 to 338 (GDEEEPGGTDED) are enriched in acidic residues.

Interacts (via coiled coil) with TRIM17 (via coiled coil).

In terms of biological role, may play a role in the process of differentiation and maturation of neuronal cells. May regulate the activity of TRIM17. Is a negative regulator of PAX6 expression. This Bos taurus (Bovine) protein is Tripartite motif-containing protein 44 (TRIM44).